The chain runs to 452 residues: Isocitrate dehydrogenase [NADP], mitochondrial (452 aa).

The transit peptide at 1–39 (MAGYLRAVSSLCRASGSARTWAPAALTVPSWPEQPRRHY) directs the protein to the mitochondrion. N6-acetyllysine is present on residues K45, K48, K67, and K69. N6-acetyllysine; alternate occurs at positions 80 and 106. 2 positions are modified to N6-succinyllysine; alternate: K80 and K106. NADP(+) contacts are provided by residues 115-117 (TIT) and R122. A D-threo-isocitrate-binding site is contributed by T117. Residues 134 to 140 (SPNGTIR) and R149 each bind D-threo-isocitrate. The residue at position 155 (K155) is an N6-acetyllysine. K166 carries the N6-acetyllysine; alternate modification. At K166 the chain carries N6-succinyllysine; alternate. R172 is a D-threo-isocitrate binding site. 2 positions are modified to N6-acetyllysine; alternate: K180 and K193. K180 and K193 each carry N6-succinyllysine; alternate. K199 is subject to N6-acetyllysine. K256 carries the N6-acetyllysine; alternate modification. K256 bears the N6-succinyllysine; alternate mark. An N6-acetyllysine mark is found at K263, K272, K275, and K280. At K282 the chain carries N6-acetyllysine; alternate. The residue at position 282 (K282) is an N6-succinyllysine; alternate. D291 is a Mn(2+) binding site. K299 contributes to the NADP(+) binding site. D314 contributes to the Mn(2+) binding site. NADP(+)-binding positions include 349–354 (GTVTRH) and N367. N6-acetyllysine; alternate is present on K384. Residue K384 is modified to N6-succinyllysine; alternate. N6-acetyllysine occurs at positions 400, 413, and 442.

The protein belongs to the isocitrate and isopropylmalate dehydrogenases family. As to quaternary structure, homodimer. Mg(2+) serves as cofactor. It depends on Mn(2+) as a cofactor. Post-translationally, acetylation at Lys-413 dramatically reduces catalytic activity. Deacetylated by SIRT3. Predominantly expressed in heart, liver and kidney. Expressed in activated B lymphocytes.

Its subcellular location is the mitochondrion. It catalyses the reaction D-threo-isocitrate + NADP(+) = 2-oxoglutarate + CO2 + NADPH. In terms of biological role, plays a role in intermediary metabolism and energy production. It may tightly associate or interact with the pyruvate dehydrogenase complex. The protein is Isocitrate dehydrogenase [NADP], mitochondrial (Idh2) of Mus musculus (Mouse).